Here is a 162-residue protein sequence, read N- to C-terminus: Protein S40-4 (162 aa).

It belongs to the senescence regulator S40 family.

It is found in the cytoplasm. This is Protein S40-4 from Arabidopsis thaliana (Mouse-ear cress).